The primary structure comprises 643 residues: 3D-(3,5/4)-trihydroxycyclohexane-1,2-dione hydrolase (643 aa).

Position 65 (E65) interacts with thiamine diphosphate. The thiamine pyrophosphate binding stretch occupies residues 441-521 (SLPGDLQRMW…VNVLLFDNCG (81 aa)). D492 and N519 together coordinate Mg(2+).

Belongs to the TPP enzyme family. Mg(2+) serves as cofactor. Thiamine diphosphate is required as a cofactor.

It catalyses the reaction 3D-3,5/4-trihydroxycyclohexane-1,2-dione + H2O = 5-deoxy-D-glucuronate + H(+). It participates in polyol metabolism; myo-inositol degradation into acetyl-CoA; acetyl-CoA from myo-inositol: step 3/7. In terms of biological role, involved in the cleavage of the C1-C2 bond of 3D-(3,5/4)-trihydroxycyclohexane-1,2-dione (THcHDO) to yield 5-deoxy-glucuronate (5DG). The protein is 3D-(3,5/4)-trihydroxycyclohexane-1,2-dione hydrolase of Clostridium botulinum (strain Eklund 17B / Type B).